The chain runs to 37 residues: Potassium channel toxin alpha-KTx 1.11 (37 aa).

Intrachain disulfides connect cysteine 7/cysteine 28, cysteine 13/cysteine 33, and cysteine 17/cysteine 35.

This sequence belongs to the short scorpion toxin superfamily. Potassium channel inhibitor family. Alpha-KTx 01 subfamily. Expressed by the venom gland.

The protein localises to the secreted. In terms of biological role, reversibly blocks the high conductance calcium-activated potassium channels composed of only alpha subunits (KCa1.1/KCNMA1). Unreversibly blocks the high conductance calcium-activated potassium channels composed of alpha and beta1 subunits (KCNMA1 and KCNMB1). Unreversibly and weakly blocks the high conductance calcium-activated potassium channels composed of alpha and beta4 (KCNMA1 and KCNMB4). The polypeptide is Potassium channel toxin alpha-KTx 1.11 (Centruroides noxius (Mexican scorpion)).